The chain runs to 51 residues: Basic phospholipase A2 homolog BmatTX-I (51 aa).

Residues cysteine 28 and cysteine 44 are joined by a disulfide bond.

As to quaternary structure, monomer. Expressed by the venom gland.

The protein resides in the secreted. Its function is as follows. Snake venom phospholipase A2 homolog that lacks enzymatic activity. Shows high myotoxic activity, neutrophile activation (demonstrated by activation induction of IL-1beta production), slight cytotoxicity against Jurkat (leukemia T) and SK-BR-3 (breast adenocarcinoma) tumor cell lines, and slight antiparasitic activity against promastigote forms of Leishmania amazonensis. A model of myotoxic mechanism has been proposed: an apo Lys49-PLA2 is activated by the entrance of a hydrophobic molecule (e.g. fatty acid) at the hydrophobic channel of the protein leading to a reorientation of a monomer. This reorientation causes a transition between 'inactive' to 'active' states, causing alignment of C-terminal and membrane-docking sites (MDoS) side-by-side and putting the membrane-disruption sites (MDiS) in the same plane, exposed to solvent and in a symmetric position for both monomers. The MDoS region stabilizes the toxin on membrane by the interaction of charged residues with phospholipid head groups. Subsequently, the MDiS region destabilizes the membrane with penetration of hydrophobic residues. This insertion causes a disorganization of the membrane, allowing an uncontrolled influx of ions (i.e. calcium and sodium), and eventually triggering irreversible intracellular alterations and cell death. In Bothrops mattogrossensis (Pitviper), this protein is Basic phospholipase A2 homolog BmatTX-I.